The following is a 220-amino-acid chain: MESNNVVLLDFWPSSFGMRLRIALALKGIKYEAKEENLSDKSPLLLEMNPVHKKIPILIHNSKAICESLNILEYIDEVWHDKCPLLPSDPYERSQARFWADYIDKKIYSTGRRVWSGKGEDQEEAKKEFIEILKTLEGELGNKTYFGGDNLGFVDVALVPFTSWFYSYETCANFSIEAECPKLVVWAKTCMESESVSKSLPHPHKIYGFVLELKHKLGLA.

The region spanning 4–83 is the GST N-terminal domain; the sequence is NNVVLLDFWP…YIDEVWHDKC (80 aa). Residues S14, K41, I55, and 67-68 each bind glutathione; that span reads ES. In terms of domain architecture, GST C-terminal spans 89-209; sequence DPYERSQARF…LPHPHKIYGF (121 aa).

The protein belongs to the GST superfamily. HSP26 family.

It carries out the reaction RX + glutathione = an S-substituted glutathione + a halide anion + H(+). The protein is Probable glutathione S-transferase parA (PARA) of Nicotiana tabacum (Common tobacco).